Consider the following 160-residue polypeptide: Cytochrome b6-f complex subunit 4 (160 aa).

The next 3 membrane-spanning stretches (helical) occupy residues 36-56 (LLYI…GLSV), 95-115 (LLGV…PFIE), and 127-147 (PVAM…GIGA).

It belongs to the cytochrome b family. PetD subfamily. As to quaternary structure, the 4 large subunits of the cytochrome b6-f complex are cytochrome b6, subunit IV (17 kDa polypeptide, petD), cytochrome f and the Rieske protein, while the 4 small subunits are petG, petL, petM and petN. The complex functions as a dimer.

It localises to the plastid. It is found in the chloroplast thylakoid membrane. Component of the cytochrome b6-f complex, which mediates electron transfer between photosystem II (PSII) and photosystem I (PSI), cyclic electron flow around PSI, and state transitions. The protein is Cytochrome b6-f complex subunit 4 of Guillardia theta (Cryptophyte).